The primary structure comprises 141 residues: Galactose-6-phosphate isomerase subunit LacA (141 aa).

The protein belongs to the LacAB/RpiB family. In terms of assembly, heteromultimeric protein consisting of LacA and LacB.

The catalysed reaction is aldehydo-D-galactose 6-phosphate = keto-D-tagatose 6-phosphate. Its pathway is carbohydrate metabolism; D-galactose 6-phosphate degradation; D-tagatose 6-phosphate from D-galactose 6-phosphate: step 1/1. In Streptococcus equi subsp. equi (strain 4047), this protein is Galactose-6-phosphate isomerase subunit LacA.